The chain runs to 189 residues: GTP cyclohydrolase 1 (189 aa).

Cys-79, His-82, and Cys-150 together coordinate Zn(2+).

This sequence belongs to the GTP cyclohydrolase I family. Toroid-shaped homodecamer, composed of two pentamers of five dimers.

It carries out the reaction GTP + H2O = 7,8-dihydroneopterin 3'-triphosphate + formate + H(+). The protein operates within cofactor biosynthesis; 7,8-dihydroneopterin triphosphate biosynthesis; 7,8-dihydroneopterin triphosphate from GTP: step 1/1. This chain is GTP cyclohydrolase 1, found in Rickettsia massiliae (strain Mtu5).